We begin with the raw amino-acid sequence, 330 residues long: Aspartate--ammonia ligase (330 aa).

This sequence belongs to the class-II aminoacyl-tRNA synthetase family. AsnA subfamily.

The protein localises to the cytoplasm. It carries out the reaction L-aspartate + NH4(+) + ATP = L-asparagine + AMP + diphosphate + H(+). The protein operates within amino-acid biosynthesis; L-asparagine biosynthesis; L-asparagine from L-aspartate (ammonia route): step 1/1. The protein is Aspartate--ammonia ligase of Salmonella newport (strain SL254).